The primary structure comprises 523 residues: La-related protein 1C (523 aa).

Positions 1–16 are enriched in low complexity; sequence MASATSNNPASSSMSP. 2 disordered regions span residues 1-52 and 95-313; these read MASA…VRGE and AAGD…VRHP. Alanine 2 bears the N-acetylalanine mark. Over residues 22-31 the composition is skewed to polar residues; the sequence is NHGSPTASVA. Composition is skewed to low complexity over residues 32–44 and 146–169; these read QSPRRPSRQVSSP and SNKSSSDSLKSLGDVPSSSSASSS. Serine 33 bears the Phosphoserine mark. 2 stretches are compositionally biased toward polar residues: residues 206 to 270 and 282 to 305; these read QRNG…NGNH and HGNQNWTFQRSFNGREGNAQSQRG. Positions 363–452 constitute an HTH La-type RNA-binding domain; it reads HYQDPPLHMK…RDNWQNWVLR (90 aa). Residues 474–523 are disordered; it reads GNLSVDQSSADPIGGSSSQLQPTEALSDDQQQSSSTAPVSNHNAPDGANR. Residues 477–516 are compositionally biased toward polar residues; sequence SVDQSSADPIGGSSSQLQPTEALSDDQQQSSSTAPVSNHN.

Belongs to the LARP family. In terms of tissue distribution, age-dependent accumulation in rosette leaves.

The protein localises to the cytoplasm. Promotes leaf senescence mediated by abscisic acid (ABA), salicylic acid (SA) and jasmonic acid (MeJA), probably though the induction of expression of senescence-associated genes (SAGs) and defense-related genes. This chain is La-related protein 1C (LARP1C), found in Arabidopsis thaliana (Mouse-ear cress).